The chain runs to 120 residues: Large ribosomal subunit protein bL20 (120 aa).

It belongs to the bacterial ribosomal protein bL20 family.

In terms of biological role, binds directly to 23S ribosomal RNA and is necessary for the in vitro assembly process of the 50S ribosomal subunit. It is not involved in the protein synthesizing functions of that subunit. The sequence is that of Large ribosomal subunit protein bL20 from Karelsulcia muelleri (strain GWSS) (Sulcia muelleri).